A 581-amino-acid polypeptide reads, in one-letter code: Sulfate adenylyltransferase (581 aa).

Residues 1–176 (MANAPHGGVL…VQAIQAPTHF (176 aa)) form an N-terminal region. Residues 177 to 401 (DYVPLRYTPA…LRESYPPRPQ (225 aa)) are catalytic. Residue Gln204 participates in sulfate binding. Residues 204–207 (QTRN) and 298–301 (GRDH) contribute to the ATP site. Active-site residues include Thr205, Arg206, and Asn207. Arg206 serves as a coordination point for sulfate. Sulfate is bound at residue Ala302. Residue Met340 coordinates ATP. The allosteric regulation domain; adenylyl-sulfate kinase-like stretch occupies residues 402-581 (QGFTILLTGL…IMILESQNLV (180 aa)). Residues 441–444 (EELR), 486–487 (TA), and Arg526 each bind 3'-phosphoadenylyl sulfate.

In the N-terminal section; belongs to the sulfate adenylyltransferase family. This sequence in the C-terminal section; belongs to the APS kinase family. As to quaternary structure, homohexamer. Dimer of trimers.

Its subcellular location is the cytoplasm. The enzyme catalyses sulfate + ATP + H(+) = adenosine 5'-phosphosulfate + diphosphate. Its pathway is sulfur metabolism; hydrogen sulfide biosynthesis; sulfite from sulfate: step 1/3. Its activity is regulated as follows. Allosterically inhibited by 3'-phosphoadenosine 5'-phosphosulfate (PAPS). In terms of biological role, catalyzes the first intracellular reaction of sulfate assimilation, forming adenosine-5'-phosphosulfate (APS) from inorganic sulfate and ATP. Plays an important role in sulfate activation as a component of the biosynthesis pathway of sulfur-containing amino acids. The sequence is that of Sulfate adenylyltransferase from Cryptococcus neoformans var. grubii serotype A (strain H99 / ATCC 208821 / CBS 10515 / FGSC 9487) (Filobasidiella neoformans var. grubii).